Reading from the N-terminus, the 157-residue chain is Transcription elongation factor GreA (157 aa).

Residues 17 to 37 (ELERLLKLRPQISEAIAEARE) are a coiled coil.

Belongs to the GreA/GreB family.

Necessary for efficient RNA polymerase transcription elongation past template-encoded arresting sites. The arresting sites in DNA have the property of trapping a certain fraction of elongating RNA polymerases that pass through, resulting in locked ternary complexes. Cleavage of the nascent transcript by cleavage factors such as GreA or GreB allows the resumption of elongation from the new 3'terminus. GreA releases sequences of 2 to 3 nucleotides. The chain is Transcription elongation factor GreA from Vibrio parahaemolyticus serotype O3:K6 (strain RIMD 2210633).